Reading from the N-terminus, the 119-residue chain is Large ribosomal subunit protein uL18 (119 aa).

Positions 1 to 10 (MKKIKEAEQR) are enriched in basic and acidic residues. A disordered region spans residues 1 to 20 (MKKIKEAEQRKLRRKKRIKD).

This sequence belongs to the universal ribosomal protein uL18 family. In terms of assembly, part of the 50S ribosomal subunit; part of the 5S rRNA/L5/L18/L25 subcomplex. Contacts the 5S and 23S rRNAs.

Its function is as follows. This is one of the proteins that bind and probably mediate the attachment of the 5S RNA into the large ribosomal subunit, where it forms part of the central protuberance. The sequence is that of Large ribosomal subunit protein uL18 from Borreliella burgdorferi (strain ATCC 35210 / DSM 4680 / CIP 102532 / B31) (Borrelia burgdorferi).